The following is a 510-amino-acid chain: Histidine ammonia-lyase (510 aa).

Positions 143–145 (ASG) form a cross-link, 5-imidazolinone (Ala-Gly). A 2,3-didehydroalanine (Ser) modification is found at Ser144.

Belongs to the PAL/histidase family. Post-translationally, contains an active site 4-methylidene-imidazol-5-one (MIO), which is formed autocatalytically by cyclization and dehydration of residues Ala-Ser-Gly.

The protein resides in the cytoplasm. The catalysed reaction is L-histidine = trans-urocanate + NH4(+). It participates in amino-acid degradation; L-histidine degradation into L-glutamate; N-formimidoyl-L-glutamate from L-histidine: step 1/3. The polypeptide is Histidine ammonia-lyase (Shewanella sediminis (strain HAW-EB3)).